Consider the following 366-residue polypeptide: CRS2-associated factor 2, mitochondrial (366 aa).

Residues 1–14 constitute a mitochondrion transit peptide; the sequence is MLLPRDLLLLPWRR. The segment at 24–82 is disordered; the sequence is RRLNHHRAPPFSDPDDDPPFTRLAERPPRAPSKKKKKEEEDQGGRIRPPEPASSDLPFD. A compositionally biased stretch (basic and acidic residues) spans 60-71; the sequence is KEEEDQGGRIRP. CRM domains are found at residues 143 to 241 and 263 to 359; these read EPLA…QRPQ and DGLT…SVSL.

In terms of assembly, part of large ribonucleo-protein complexes that include group IIB introns.

It localises to the mitochondrion. May be involved in the splicing of group IIB introns in mitochondria. The polypeptide is CRS2-associated factor 2, mitochondrial (Oryza sativa subsp. japonica (Rice)).